The following is a 260-amino-acid chain: MVLKELRQKRPLVHNITNYVVAQFVANGLLALGASPLMSDAIDEMQDLAKISDALAINIGTLNERTILCAKEAIKHYKALNKPIVLDPVGCSASALRHDTSLELLESEGISALRGNAAELGSLVGISCESKGLDSHDATTPVEIIKRAAQKYSVIAVMTGKTDYVSDGKKVLSITGGSEYLALITGAGCLHAAACASFLGLKKDPLDSMVQLCALYKQAAFSAQKKVLENNGSNGSFLFYFLDALSLPIKLENSLIKEEW.

Position 38 (Met-38) interacts with substrate. Positions 114 and 159 each coordinate ATP. Gly-186 lines the substrate pocket.

Belongs to the Thz kinase family. The cofactor is Mg(2+).

It catalyses the reaction 5-(2-hydroxyethyl)-4-methylthiazole + ATP = 4-methyl-5-(2-phosphooxyethyl)-thiazole + ADP + H(+). Its pathway is cofactor biosynthesis; thiamine diphosphate biosynthesis; 4-methyl-5-(2-phosphoethyl)-thiazole from 5-(2-hydroxyethyl)-4-methylthiazole: step 1/1. Its function is as follows. Catalyzes the phosphorylation of the hydroxyl group of 4-methyl-5-beta-hydroxyethylthiazole (THZ). In Helicobacter pylori (strain G27), this protein is Hydroxyethylthiazole kinase.